We begin with the raw amino-acid sequence, 419 residues long: G-protein coupled receptor 151 (419 aa).

The Extracellular portion of the chain corresponds to 1 to 41; the sequence is MLAAAFADSNSSSMNVSFAHLHFAGGYLPSDSQDWRTIIPA. Asparagine 10 and asparagine 15 each carry an N-linked (GlcNAc...) asparagine glycan. Residues 42 to 62 traverse the membrane as a helical segment; it reads LLVAVCLVGFVGNLCVIGILL. Over 63–71 the chain is Cytoplasmic; the sequence is HNAWKGKPS. The chain crosses the membrane as a helical span at residues 72-92; the sequence is MIHSLILNLSLADLSLLLFSA. At 93–116 the chain is on the extracellular side; sequence PIRATAYSKSVWDLGWFVCKSSDW. Residues cysteine 111 and cysteine 187 are joined by a disulfide bond. Residues 117-137 form a helical membrane-spanning segment; that stretch reads FIHTCMAAKSLTIVVVAKVCF. Topologically, residues 138 to 153 are cytoplasmic; the sequence is MYASDPAKQVSIHNYT. Residues 154–174 traverse the membrane as a helical segment; it reads IWSVLVAIWTVASLLPLPEWF. Residues 175-201 are Extracellular-facing; that stretch reads FSTIRHHEGVEMCLVDVPAVAEEFMSM. Residues 202–222 form a helical membrane-spanning segment; sequence FGKLYPLLAFGLPLFFASFYF. Over 223–252 the chain is Cytoplasmic; the sequence is WRAYDQCKKRGTKTQNLRNQIRSKQVTVML. A helical membrane pass occupies residues 253–273; it reads LSIAIISALLWLPEWVAWLWV. Residues 274 to 286 lie on the Extracellular side of the membrane; sequence WHLKAAGPAPPQG. A helical membrane pass occupies residues 287 to 307; it reads FIALSQVLMFSISSANPLIFL. Residues 308–419 lie on the Cytoplasmic side of the membrane; the sequence is VMSEEFREGL…EDQETGEGVK (112 aa). The disordered stretch occupies residues 330-419; the sequence is PTVSESQETP…EDQETGEGVK (90 aa). Polar residues predominate over residues 332 to 341; sequence VSESQETPAG. The segment covering 410 to 419 has biased composition (acidic residues); sequence EDQETGEGVK.

This sequence belongs to the G-protein coupled receptor 1 family. High expression in the spinal cord.

It is found in the cell membrane. Its function is as follows. Proton-sensing G-protein coupled receptor. The protein is G-protein coupled receptor 151 (GPR151) of Homo sapiens (Human).